We begin with the raw amino-acid sequence, 513 residues long: Bifunctional purine biosynthesis protein PurH (513 aa).

The region spanning 1–144 (MKRALVSVSD…KNYRDVTIVV (144 aa)) is the MGS-like domain.

The protein belongs to the PurH family.

It carries out the reaction (6R)-10-formyltetrahydrofolate + 5-amino-1-(5-phospho-beta-D-ribosyl)imidazole-4-carboxamide = 5-formamido-1-(5-phospho-D-ribosyl)imidazole-4-carboxamide + (6S)-5,6,7,8-tetrahydrofolate. The enzyme catalyses IMP + H2O = 5-formamido-1-(5-phospho-D-ribosyl)imidazole-4-carboxamide. Its pathway is purine metabolism; IMP biosynthesis via de novo pathway; 5-formamido-1-(5-phospho-D-ribosyl)imidazole-4-carboxamide from 5-amino-1-(5-phospho-D-ribosyl)imidazole-4-carboxamide (10-formyl THF route): step 1/1. It functions in the pathway purine metabolism; IMP biosynthesis via de novo pathway; IMP from 5-formamido-1-(5-phospho-D-ribosyl)imidazole-4-carboxamide: step 1/1. In Lactobacillus delbrueckii subsp. bulgaricus (strain ATCC BAA-365 / Lb-18), this protein is Bifunctional purine biosynthesis protein PurH.